The following is a 442-amino-acid chain: Citrate synthase (442 aa).

Active-site residues include His274, His320, and Asp375.

Belongs to the citrate synthase family.

The catalysed reaction is oxaloacetate + acetyl-CoA + H2O = citrate + CoA + H(+). It participates in carbohydrate metabolism; tricarboxylic acid cycle; isocitrate from oxaloacetate: step 1/2. In terms of biological role, catalyzes both citrate generation and citrate cleavage. Part of a reversible tricarboxylic acid (TCA) cycle that can fix carbon dioxide autotrophically and may represent an ancestral mode of the conventional reductive TCA (rTCA) cycle. The direction is controlled by the available carbon source(s). The chain is Citrate synthase from Thermosulfidibacter takaii (strain DSM 17441 / JCM 13301 / NBRC 103674 / ABI70S6).